The primary structure comprises 277 residues: Ubiquitin-conjugating enzyme suppressor 1 (277 aa).

The tract at residues 254–277 is disordered; that stretch reads RTLACPDETNDNRGSEHYTKRKKI.

Not known; its elevated expression suppresses the conditional cell cycle defects associated with UBC3/CDC34 mutations. The protein is Ubiquitin-conjugating enzyme suppressor 1 (UBS1) of Saccharomyces cerevisiae (strain ATCC 204508 / S288c) (Baker's yeast).